Consider the following 489-residue polypeptide: ERO1-like protein alpha (489 aa).

An N-terminal signal peptide occupies residues 1–20; the sequence is METCVLLLGLFLTSVHVTTA. Intrachain disulfides connect Cys27–Cys40, Cys29–Cys38, Cys77–Cys382, Cys86–Cys91, Cys86–Cys123, Cys91–Cys96, Cys200–Cys232, and Cys385–Cys388. FAD is bound by residues Arg179, Thr181, and Trp192. Residues Ser243 and His246 each coordinate FAD. Asn271 is a glycosylation site (N-linked (GlcNAc...) asparagine). Residues Arg278 and Arg291 each coordinate FAD. Asn375 is a glycosylation site (N-linked (GlcNAc...) asparagine).

This sequence belongs to the EROs family. As to quaternary structure, predominantly monomer. May function both as a monomer and a homodimer. Requires FAD as cofactor. In terms of processing, the Cys-86/Cys-91 and Cys-385/Cys-388 disulfide bonds constitute the redox-active center. The Cys-86/Cys-91 disulfide bond may accept electron from protein disulfide isomerase (PDI) and funnel them to the active site disulfide Cys-385/Cys-388.

Its subcellular location is the endoplasmic reticulum membrane. Its activity is regulated as follows. Enzyme activity is tightly regulated to prevent the accumulation of reactive oxygen species in the endoplasmic reticulum. Reversibly down-regulated by the formation of disulfide bonds between the active site Cys-86 and Cys-123, and between Cys-91 and Cys-96. Glutathione may be required to regulate its activity in the endoplasmic reticulum. In terms of biological role, oxidoreductase involved in disulfide bond formation in the endoplasmic reticulum. Efficiently reoxidizes P4HB/PDI, the enzyme catalyzing protein disulfide formation, in order to allow P4HB to sustain additional rounds of disulfide formation. Following P4HB reoxidation, passes its electrons to molecular oxygen via FAD, leading to the production of reactive oxygen species (ROS) in the cell. Required for the folding of immunoglobulins. The polypeptide is ERO1-like protein alpha (Danio rerio (Zebrafish)).